A 569-amino-acid chain; its full sequence is Paxillin-B (569 aa).

Residues 10-18 carry the LD motif 1 motif; it reads DLDLLLADL. Polar residues predominate over residues 62 to 78; sequence QPQTVQTISTPAPKNHN. Positions 62–103 are disordered; the sequence is QPQTVQTISTPAPKNHNTTTTTASFSVSSQPAPQPPQQSQQI. Residues 79-102 show a composition bias toward low complexity; sequence TTTTTASFSVSSQPAPQPPQQSQQ. The short motif at 106-112 is the LD motif 2 element; that stretch reads LDDLDEL. The disordered stretch occupies residues 129 to 311; sequence TTPEEHITHA…SPKVVHGDDL (183 aa). Over residues 150-161 the composition is skewed to low complexity; it reads NTSSTNSASSLS. 2 stretches are compositionally biased toward polar residues: residues 162-188 and 196-206; these read RPNN…TTKK and TLETTSGNNVY. A compositionally biased stretch (low complexity) spans 207-217; it reads SSQPSQSQPQP. The short motif at 232 to 239 is the LD motif 3 element; sequence LDELLKGL. A compositionally biased stretch (basic residues) spans 258–272; that stretch reads HQHHHQHQHHHHHNP. Residues 273-301 show a composition bias toward low complexity; that stretch reads NHNQTQTVTTQINIGRTNTPNNNNNNNTN. The LD motif 4 motif lies at 311–318; sequence LDNLLNNL. 4 LIM zinc-binding domains span residues 334–391, 393–452, 453–510, and 511–569; these read GTCG…QELF, ARCA…TFAV, RCGG…QQAG, and SVCS…KLFA.

Belongs to the paxillin family. In terms of tissue distribution, expressed in the upper and lower cup of the fruiting body.

The protein localises to the cytoplasm. It localises to the cell cortex. Its subcellular location is the cell projection. The protein resides in the filopodium. It is found in the cell junction. The protein localises to the focal adhesion. It localises to the cytoskeleton. Required for cell-substrate adhesion, cell sorting, slug migration, and cell differentiation. May function upstream of limB. In Dictyostelium discoideum (Social amoeba), this protein is Paxillin-B (paxB).